The sequence spans 462 residues: L-seryl-tRNA(Sec) selenium transferase (462 aa).

N6-(pyridoxal phosphate)lysine is present on Lys-292.

The protein belongs to the SelA family. The cofactor is pyridoxal 5'-phosphate.

The protein resides in the cytoplasm. The catalysed reaction is L-seryl-tRNA(Sec) + selenophosphate + H(+) = L-selenocysteinyl-tRNA(Sec) + phosphate. It functions in the pathway aminoacyl-tRNA biosynthesis; selenocysteinyl-tRNA(Sec) biosynthesis; selenocysteinyl-tRNA(Sec) from L-seryl-tRNA(Sec) (bacterial route): step 1/1. Functionally, converts seryl-tRNA(Sec) to selenocysteinyl-tRNA(Sec) required for selenoprotein biosynthesis. The sequence is that of L-seryl-tRNA(Sec) selenium transferase from Geotalea uraniireducens (strain Rf4) (Geobacter uraniireducens).